We begin with the raw amino-acid sequence, 416 residues long: Keratin, type I cuticular Ha1 (416 aa).

A head region spans residues 2-56; the sequence is PYNCCLPALSCRTSCSSRPCVPPSCHGCTLPGACNIPANVGNCNWFCEGSFNGNE. The 312-residue stretch at 56–367 folds into the IF rod domain; the sequence is EKETMQFLND…GLLESEDCKL (312 aa). The segment at 57-91 is coil 1A; it reads KETMQFLNDRLASYMEKVRQLERENAELECRIQER. A linker 1 region spans residues 92-102; that stretch reads NQQQDPLVCPA. Positions 103–203 are coil 1B; sequence YQAYFRTIEE…HEEEVNTLRC (101 aa). Residues 204-219 are linker 12; sequence QLGDRLNVEVDAAPTV. Residues 220–363 form a coil 2 region; that stretch reads DLNRVLNETR…NTYRGLLESE (144 aa). The tract at residues 364–416 is tail; the sequence is DCKLPCNPCATSNACGKPIGPCVSNPCVPCPPPAPCTPCVPRPRCGPCNSFVR.

It belongs to the intermediate filament family.

This Mus musculus (Mouse) protein is Keratin, type I cuticular Ha1 (Krt31).